The following is a 299-amino-acid chain: Nucleotide-binding protein Moth_0258 (299 aa).

14–21 is a binding site for ATP; that stretch reads GLSGAGKT. 68 to 71 lines the GTP pocket; that stretch reads DIRG.

The protein belongs to the RapZ-like family.

Functionally, displays ATPase and GTPase activities. The chain is Nucleotide-binding protein Moth_0258 from Moorella thermoacetica (strain ATCC 39073 / JCM 9320).